The sequence spans 174 residues: Gamma-crystallin C (174 aa).

2 Beta/gamma crystallin 'Greek key' domains span residues 2-40 (GKITFFEDRSFQGRCYECSSDCPNLQTYFSRCNSVRVDS) and 41-83 (GCWM…RLIP). At Cys-23 the chain carries S-methylcysteine. The connecting peptide stretch occupies residues 84–87 (HAGS). Beta/gamma crystallin 'Greek key' domains are found at residues 88-128 (HRMR…QVLE) and 129-171 (GCWV…RRVV).

Belongs to the beta/gamma-crystallin family.

Its function is as follows. Crystallins are the dominant structural components of the vertebrate eye lens. The chain is Gamma-crystallin C (Crygc) from Mus musculus (Mouse).